Consider the following 430-residue polypeptide: Palmitoyltransferase ZDHHC11 (430 aa).

Over 1–46 (MTNLNCFGRHRRRTAPHNATGSRSELVAPPIHSRINGWSSPLHSFQ) the chain is Cytoplasmic. Residues 47–67 (FIALLIFSFMAIVAFGIYVPL) form a helical membrane-spanning segment. Over 68–76 (LPAPWSYAA) the chain is Lumenal. A helical transmembrane segment spans residues 77–97 (YALIGSAFVLHLFSHVTAVTI). The Cytoplasmic portion of the chain corresponds to 98–176 (DPADVNVRRR…GGRNYWFFFT (79 aa)). The region spanning 129–179 (LHCTLCEVDVSPKAKHCSTCNKCIADFDHHCKWLNNCVGGRNYWFFFTAVS) is the DHHC domain. Cysteine 159 functions as the S-palmitoyl cysteine intermediate in the catalytic mechanism. Residues 177 to 197 (AVSSAVIGVILLIPLVLFVFI) form a helical membrane-spanning segment. Topologically, residues 198-234 (EHYVNPAVLRTAPQFQTVKGNGTWLVFLPVAPVETSS) are lumenal. A helical transmembrane segment spans residues 235–255 (ISLLVVSFITALLSLAALLLL). Residues 256–430 (CHLLCFHIYL…QYLHFKQKMP (175 aa)) lie on the Cytoplasmic side of the membrane.

It belongs to the DHHC palmitoyltransferase family.

It localises to the endoplasmic reticulum membrane. The catalysed reaction is L-cysteinyl-[protein] + hexadecanoyl-CoA = S-hexadecanoyl-L-cysteinyl-[protein] + CoA. Its function is as follows. Endoplasmic reticulum-localized palmitoyltransferase that could catalyze the addition of palmitate onto protein substrates. The polypeptide is Palmitoyltransferase ZDHHC11 (Danio rerio (Zebrafish)).